The sequence spans 111 residues: Ig kappa chain V-III region PC 6684 (111 aa).

The segment at 1–23 (DIVLTQSPASLAVSLGQRATISC) is framework-1. A disulfide bond links cysteine 23 and cysteine 92. The interval 24-38 (RASKSVSTSGYSYMH) is complementarity-determining-1. Residues 39 to 53 (WYQQKPGQPPKLLIY) are framework-2. Residues 54-60 (LASNLES) form a complementarity-determining-2 region. A framework-3 region spans residues 61–92 (GVPARFSGSGSGTDFTLNIHPVEEEDAATYYC). Residues 93 to 101 (QHSRELPRT) form a complementarity-determining-3 region. A framework-4 region spans residues 102–111 (FGGGTKLEIK).

In Mus musculus (Mouse), this protein is Ig kappa chain V-III region PC 6684.